A 229-amino-acid chain; its full sequence is Putative N-acetylmannosamine-6-phosphate 2-epimerase (229 aa).

It belongs to the NanE family.

The catalysed reaction is an N-acyl-D-glucosamine 6-phosphate = an N-acyl-D-mannosamine 6-phosphate. It functions in the pathway amino-sugar metabolism; N-acetylneuraminate degradation; D-fructose 6-phosphate from N-acetylneuraminate: step 3/5. Functionally, converts N-acetylmannosamine-6-phosphate (ManNAc-6-P) to N-acetylglucosamine-6-phosphate (GlcNAc-6-P). The sequence is that of Putative N-acetylmannosamine-6-phosphate 2-epimerase from Shigella flexneri serotype 5b (strain 8401).